Here is a 386-residue protein sequence, read N- to C-terminus: Oxytocin receptor (386 aa).

A disordered region spans residues 1-31 (MEGVLAANWSAEAVNSSAAPPEAEGNRTAGP). The Extracellular portion of the chain corresponds to 1–38 (MEGVLAANWSAEAVNSSAAPPEAEGNRTAGPPQRNEAL). N8, N15, and N26 each carry an N-linked (GlcNAc...) asparagine glycan. A helical membrane pass occupies residues 39-63 (ARVEVAVLCLILFLALSGNACVLLA). Topologically, residues 64-74 (LRTTRHKHSRL) are cytoplasmic. Residues 75–97 (FFFMKHLSIADLVVAVFQVLPQL) form a helical membrane-spanning segment. Residues 98–113 (LWDITFRFYGPDLLCR) lie on the Extracellular side of the membrane. Residues C112 and C187 are joined by a disulfide bond. Residues 114–135 (LVKYLQVVGMFASTYLLLLMSL) form a helical membrane-spanning segment. At 136-154 (DRCLAICQPLRALRRPADR) the chain is on the cytoplasmic side. A helical transmembrane segment spans residues 155–175 (LAVLATWLGCLVASAPQVHIF). Residues 176–202 (SLREVADGVFDCWAVFIQPWGPKAYIT) are Extracellular-facing. Residues 203–225 (WITLAVYIVPVIVLAACYGLISF) form a helical membrane-spanning segment. At 226–277 (KIWQNLRLKTAAEAAEAIAGTEGAAAGSRGRAALARVSSVKLISKAKIRTVK) the chain is on the cytoplasmic side. A helical transmembrane segment spans residues 278–296 (MTFIIVLAFIVCWTPFFFV). Over 297 to 311 (QMWSVWDADAPKEAS) the chain is Extracellular. A helical transmembrane segment spans residues 312–334 (AFIIAMLLASLNSCCNPWIYMLF). The Cytoplasmic portion of the chain corresponds to 335-386 (TGHLFHELVQRFLCCSSSHLKTSRPGETSVSKKSNSSTFVLSQHSSSQKSCS). Polar residues predominate over residues 355–375 (KTSRPGETSVSKKSNSSTFVL). A disordered region spans residues 355–386 (KTSRPGETSVSKKSNSSTFVLSQHSSSQKSCS). Residues S368 and S370 each carry the phosphoserine modification. Low complexity predominate over residues 376–386 (SQHSSSQKSCS).

It belongs to the G-protein coupled receptor 1 family. Vasopressin/oxytocin receptor subfamily.

It localises to the cell membrane. Functionally, receptor for oxytocin. The activity of this receptor is mediated by G proteins which activate a phosphatidylinositol-calcium second messenger system. The sequence is that of Oxytocin receptor (OXTR) from Sus scrofa (Pig).